The primary structure comprises 363 residues: DNA replication and repair protein RecF (363 aa).

Residue 33-40 (GDNGQGKT) participates in ATP binding.

The protein belongs to the RecF family.

The protein resides in the cytoplasm. Functionally, the RecF protein is involved in DNA metabolism; it is required for DNA replication and normal SOS inducibility. RecF binds preferentially to single-stranded, linear DNA. It also seems to bind ATP. The chain is DNA replication and repair protein RecF from Tropheryma whipplei (strain TW08/27) (Whipple's bacillus).